Consider the following 771-residue polypeptide: MANSSLLRVVLVALLLLGSVTVSAGDGRGTPIAFQAEVSKMLDILVNSLYTNRAVFLRELISNGSDALDKIRVLYLTSPKEPLTKDGEAPTMDLRISFDKEKSELILRDGGVGMTKEELAKHLGSLGTSGTKHFLEKLQEGVGAGGGDQNNLIGQFGVGFYSVFLVGDRVRVASKSDDSDEQYVWESKGDGQYFLYPDPRGNTLGRGTEITIELKPDAEQFLSAETIKKTIHQYSEFINFPIYVQEEVEVASTAATPEPAAEEGSLDEGAVEEDPDKEGDTQGVVKERRWTLVNENRPIWTRPIGNVTEEEYHTFYKAFSGDYRDPLYFNHFKVEGEVDFDSILFVPTTVDPASFSDDNSVPNTNIKLYVRRVFITDEFRDLLPRYLNFVKGIVDSNDLPLNVSREVLQESRILRVIKKKLVRKTLSMFADIAAQDEAIANGKQVESPAPSGHTHLKKPAYTKFWELYGKHLRLGVMLDSNNRNRLTKLFRYKSSRSESEYISLQTYVDRMKKGQKGIYYLSGDSVARIKKSPVLEDAVNHDVEVIFMTDAIDEYVVSQLTDFAGKKLINLAKEGVQLEESDARQRVADRKRKEKYDSFFTHLRALFGYSEVRKVILTKRMTNEAFLVSSGENQITARLASIMRGQSMSLANQQMTAERVLEVNYRHPLVDEMFKRFTVDEDDEVATDIAWVLYDTANLQAEFPVADVAAYSKRINRLLRSSVDLSADDSLLPPDDAEYTVSDTEAEEEEEQPKVDANADEEAEAVGEDDL.

The N-terminal stretch at 1 to 24 is a signal peptide; that stretch reads MANSSLLRVVLVALLLLGSVTVSA. Residues Asn-63, Asp-109, and Phe-160 each contribute to the ATP site. The N-linked (GlcNAc...) asparagine glycan is linked to Asn-63. The disordered stretch occupies residues 253 to 282; it reads TAATPEPAAEEGSLDEGAVEEDPDKEGDTQ. Acidic residues predominate over residues 260 to 277; it reads AAEEGSLDEGAVEEDPDK. N-linked (GlcNAc...) asparagine glycosylation is found at Asn-306 and Asn-402. The interval 727–771 is disordered; it reads ADDSLLPPDDAEYTVSDTEAEEEEEQPKVDANADEEAEAVGEDDL. Residues 758–771 show a composition bias toward acidic residues; the sequence is NADEEAEAVGEDDL. The Prevents secretion from ER signature appears at 768 to 771; the sequence is EDDL.

It belongs to the heat shock protein 90 family. In terms of assembly, homotetramer.

The protein resides in the endoplasmic reticulum. Functionally, molecular chaperone that functions in the processing and transport of secreted proteins. Required for the synthesis of lipophosphoglycan (LPG), a cell surface glycoconjugate. Necessary for the attachment of the galactosyl residue to the mannose within the phosphoglycan repeats of the nascent LPG chain. Also required for addition of phosphoglycan to acid phosphatase. Not required for normal growth. Has ATPase activity. Binds heparin with micromolar affinity which may facilitate infection of host cells. This Leishmania infantum protein is Endoplasmin homolog.